Reading from the N-terminus, the 764-residue chain is Myotubularin-related protein 10-B (764 aa).

The Myotubularin phosphatase domain maps to phenylalanine 208 to tyrosine 649.

This sequence belongs to the protein-tyrosine phosphatase family. Non-receptor class myotubularin subfamily.

The sequence is that of Myotubularin-related protein 10-B (mtmr10-b) from Xenopus laevis (African clawed frog).